The following is a 476-amino-acid chain: Growth/differentiation factor 10 (476 aa).

Residues 1–29 (MAPGLARISLRSQLLPLVPLLLLLRGAGC) form the signal peptide. The propeptide occupies 30–366 (GHRVPSWSSL…EKTMQKARRR (337 aa)). N-linked (GlcNAc...) asparagine glycans are attached at residues Asn114, Asn152, and Asn277. 2 disordered regions span residues 268–305 (GDFE…LDER) and 330–358 (PRTG…FDEK). 3 cysteine pairs are disulfide-bonded: Cys374–Cys441, Cys403–Cys473, and Cys407–Cys475. N-linked (GlcNAc...) asparagine glycosylation occurs at Asn467.

The protein belongs to the TGF-beta family. As to quaternary structure, homodimer or heterodimer. Can form a non-covalent complex of the mature region and the pro-region. As to expression, costa, costicartilage, femur, calvaria, trachea, aorta and brain. Predominantly in the cerebellum.

Its subcellular location is the secreted. Its function is as follows. Growth factor involved in osteogenesis and adipogenesis. Plays an inhibitory role in the process of osteoblast differentiation via SMAD2/3 pathway. Plays an inhibitory role in the process of adipogenesis. This chain is Growth/differentiation factor 10, found in Rattus norvegicus (Rat).